A 307-amino-acid chain; its full sequence is Myeloid-associated differentiation marker-like protein 2 (307 aa).

MARVEL domains are found at residues 17–154 (AVTS…ARPG) and 159–303 (YMAT…RIRF). 7 consecutive transmembrane segments (helical) span residues 53–73 (FCMAAWGFCFAFSVLVVACEF), 90–110 (AFAMLATLLCATAAVIYPLYF), 129–149 (LAASVFAGLLFLAYAAEVALT), 163–183 (VSGLLKIVQAFVACIIFGALV), 198–218 (VAVYSLCFMATVAVVVLSVMG), 232–252 (VVYTFLAVLLYLSAAVIWPVF), and 278–298 (LVVAIFTYVNLLLYIVDLAYS).

It belongs to the MAL family.

The protein localises to the membrane. The protein is Myeloid-associated differentiation marker-like protein 2 (Myadml2) of Rattus norvegicus (Rat).